The sequence spans 736 residues: ABC transporter G family member 16 (736 aa).

In terms of domain architecture, ABC transporter spans 88–332 (LDFHDLVPWR…FAGFGNPIPE (245 aa)). ATP is bound at residue 125-132 (GASGSGKS). The next 7 membrane-spanning stretches (helical) occupy residues 410 to 430 (SVIN…PFWI), 449 to 469 (LLGM…TVFW), 484 to 504 (FFAF…PVFL), 525 to 545 (VLSH…AFAV), 569 to 589 (ASFW…PHVM), 590 to 610 (LGYT…GFFI), and 709 to 729 (LLIT…CLLL). The ABC transmembrane type-2 domain maps to 430–640 (IEIKTLTRRS…PYEAVLQNEF (211 aa)).

Belongs to the ABC transporter superfamily. ABCG family. Eye pigment precursor importer (TC 3.A.1.204) subfamily.

It is found in the membrane. The sequence is that of ABC transporter G family member 16 (ABCG16) from Arabidopsis thaliana (Mouse-ear cress).